We begin with the raw amino-acid sequence, 209 residues long: Ribosomal RNA large subunit methyltransferase E (209 aa).

Positions 63, 65, 83, 99, and 124 each coordinate S-adenosyl-L-methionine. The Proton acceptor role is filled by Lys-164.

The protein belongs to the class I-like SAM-binding methyltransferase superfamily. RNA methyltransferase RlmE family.

The protein resides in the cytoplasm. It catalyses the reaction uridine(2552) in 23S rRNA + S-adenosyl-L-methionine = 2'-O-methyluridine(2552) in 23S rRNA + S-adenosyl-L-homocysteine + H(+). In terms of biological role, specifically methylates the uridine in position 2552 of 23S rRNA at the 2'-O position of the ribose in the fully assembled 50S ribosomal subunit. This Tolumonas auensis (strain DSM 9187 / NBRC 110442 / TA 4) protein is Ribosomal RNA large subunit methyltransferase E.